Consider the following 94-residue polypeptide: Small ribosomal subunit protein uS17 (94 aa).

Residues 1-22 form a disordered region; that stretch reads MSEQTSAASTTDRGDRKTRRGY.

This sequence belongs to the universal ribosomal protein uS17 family. Part of the 30S ribosomal subunit.

Functionally, one of the primary rRNA binding proteins, it binds specifically to the 5'-end of 16S ribosomal RNA. The sequence is that of Small ribosomal subunit protein uS17 from Kineococcus radiotolerans (strain ATCC BAA-149 / DSM 14245 / SRS30216).